The primary structure comprises 209 residues: Ribosomal RNA large subunit methyltransferase E (209 aa).

5 residues coordinate S-adenosyl-L-methionine: Gly-63, Trp-65, Asp-83, Asp-99, and Asp-124. The active-site Proton acceptor is the Lys-164.

The protein belongs to the class I-like SAM-binding methyltransferase superfamily. RNA methyltransferase RlmE family.

Its subcellular location is the cytoplasm. The enzyme catalyses uridine(2552) in 23S rRNA + S-adenosyl-L-methionine = 2'-O-methyluridine(2552) in 23S rRNA + S-adenosyl-L-homocysteine + H(+). Specifically methylates the uridine in position 2552 of 23S rRNA at the 2'-O position of the ribose in the fully assembled 50S ribosomal subunit. In Yersinia pseudotuberculosis serotype O:1b (strain IP 31758), this protein is Ribosomal RNA large subunit methyltransferase E.